We begin with the raw amino-acid sequence, 209 residues long: Nascent polypeptide-associated complex subunit alpha-like protein 5 (209 aa).

A disordered region spans residues E23–A71. Residues E25–G54 show a composition bias toward acidic residues. The NAC-A/B domain occupies S62 to L127. A UBA domain is found at V170 to L207.

It belongs to the NAC-alpha family.

May promote appropriate targeting of ribosome-nascent polypeptide complexes. In Arabidopsis thaliana (Mouse-ear cress), this protein is Nascent polypeptide-associated complex subunit alpha-like protein 5.